The chain runs to 78 residues: UPF0248 protein Msed_0897 (78 aa).

This sequence belongs to the UPF0248 family.

In Metallosphaera sedula (strain ATCC 51363 / DSM 5348 / JCM 9185 / NBRC 15509 / TH2), this protein is UPF0248 protein Msed_0897.